Reading from the N-terminus, the 194-residue chain is Chorion class B protein ERB4 (194 aa).

The signal sequence occupies residues 1–20 (MSSNVIVLCVSALFIQCAVS). Residues 22–72 (CVGRIGSLRGGPFDGWGYDGLGYDGFGIGGWNGRGCGGLGDDIAAAAALGA) form a left arm region. The tract at residues 73-128 (SHGGTLAVVSTSAAPTGLGIASENVYEGSVGVCGNLPFLGTADVAGEFPTAGLGGI) is central domain. Residues 129–194 (DYTCGDGAVG…RGCGCGANYY (66 aa)) form a right arm (Gly-rich tandem repeats) region.

This sequence belongs to the chorion protein family.

In terms of biological role, this protein is one of many from the eggshell of the silk moth. The sequence is that of Chorion class B protein ERB4 from Bombyx mori (Silk moth).